The chain runs to 824 residues: Type IV secretion system protein PtlC (824 aa).

An ATP-binding site is contributed by 456–463; it reads GQSGSGKT.

This sequence belongs to the TrbE/VirB4 family.

It is found in the cell membrane. Functionally, component of the type IV secretion system ptl essential for secretion of assembled pertussis toxin (PTX) through the outer membrane. The polypeptide is Type IV secretion system protein PtlC (ptlC) (Bordetella pertussis (strain Tohama I / ATCC BAA-589 / NCTC 13251)).